A 735-amino-acid polypeptide reads, in one-letter code: Serine/threonine-protein kinase BRSK2 (735 aa).

Positions 20–271 (YRLEKTLGKG…LEHIQKHIWY (252 aa)) constitute a Protein kinase domain. ATP contacts are provided by residues 26–34 (LGKGQTGLV) and Lys-49. Catalysis depends on Asp-142, which acts as the Proton acceptor. Thr-175 bears the Phosphothreonine; by LKB1 mark. Thr-261 is modified (phosphothreonine; by PKA). Residue Ser-295 is modified to Phosphoserine. The 43-residue stretch at 298–340 (DIDPDVLDSMHSLGCFRDRNKLLQDLLSEEENQEKMIYFLLLD) folds into the UBA domain. Positions 346-367 (PSHEDEDLPPRNEIDPPRKRVD) are enriched in basic and acidic residues. Disordered stretches follow at residues 346 to 476 (PSHE…GVPW), 493 to 514 (FHRRKLQVPTPEEMSNLTPESS), and 682 to 735 (KNGQ…REQP). Ser-368, Ser-383, Ser-394, Ser-413, Ala-417, Ser-424, and Ser-428 each carry phosphoserine. Over residues 411–429 (SRSISGASSGLSTSPLSSP) the composition is skewed to low complexity. The segment covering 432-446 (TPHPSPRGSPLPTPK) has biased composition (pro residues). A Phosphoserine modification is found at Ser-456. Phosphothreonine occurs at positions 460, 464, and 510. A phosphoserine mark is found at Ser-513 and Ser-514.

It belongs to the protein kinase superfamily. CAMK Ser/Thr protein kinase family. SNF1 subfamily. Interacts with FZR1, a regulatory subunit of the APC ubiquitin ligase complex. Interacts with COPS5. Interacts with PAK1. The cofactor is Mg(2+). May be phosphorylated at Thr-261 by PKA. Phosphorylated at Thr-175 by STK11/LKB1 in complex with STE20-related adapter-alpha (STRADA) pseudo kinase and CAB39. Not phosphorylated at Thr-175 by CaMKK2. In contrast, it is phosphorylated and activated by CaMKK1. May be inactivated via dephosphorylation of Thr-175 by PP2C. Post-translationally, polyubiquitinated by the APC complex in conjunction with FZR1, leading to its proteasomal degradation. Targeted for proteasomal degradation by interaction with COPS5. BRSK2 levels change during the cell cycle. BRSK2 levels are low at the G1/S boundary and gradually increase as cells progress into G2 phase. BRSK2 levels decrease rapidly at the end of mitosis.

Its subcellular location is the cytoplasm. The protein localises to the cytoskeleton. The protein resides in the microtubule organizing center. It localises to the centrosome. It is found in the perinuclear region. Its subcellular location is the endoplasmic reticulum. The catalysed reaction is L-seryl-[protein] + ATP = O-phospho-L-seryl-[protein] + ADP + H(+). The enzyme catalyses L-threonyl-[protein] + ATP = O-phospho-L-threonyl-[protein] + ADP + H(+). It carries out the reaction L-seryl-[tau protein] + ATP = O-phospho-L-seryl-[tau protein] + ADP + H(+). It catalyses the reaction L-threonyl-[tau protein] + ATP = O-phospho-L-threonyl-[tau protein] + ADP + H(+). Activated by phosphorylation on Thr-175 by STK11/LKB1. Serine/threonine-protein kinase that plays a key role in polarization of neurons and axonogenesis, cell cycle progress and insulin secretion. Phosphorylates CDK16, CDC25C, MAPT/TAU, PAK1 and WEE1. Following phosphorylation and activation by STK11/LKB1, acts as a key regulator of polarization of cortical neurons, probably by mediating phosphorylation of microtubule-associated proteins such as MAPT/TAU at 'Thr-523' and 'Ser-573'. Also regulates neuron polarization by mediating phosphorylation of WEE1 at 'Ser-642' in post-mitotic neurons, leading to down-regulate WEE1 activity in polarized neurons. Plays a role in the regulation of the mitotic cell cycle progress and the onset of mitosis. Plays a role in the regulation of insulin secretion in response to elevated glucose levels, probably via phosphorylation of CDK16 and PAK1. While BRSK2 phosphorylated at Thr-175 can inhibit insulin secretion, BRSK2 phosphorylated at Thr-261 can promote insulin secretion. Regulates reorganization of the actin cytoskeleton. May play a role in the apoptotic response triggered by endoplasmic reticulum (ER) stress. The sequence is that of Serine/threonine-protein kinase BRSK2 (Brsk2) from Rattus norvegicus (Rat).